Consider the following 707-residue polypeptide: Anti-sigma-I factor RsgI9 (707 aa).

Topologically, residues Met-1–Asn-149 are cytoplasmic. A RsgI N-terminal anti-sigma domain is found at Ile-3–Glu-50. The chain crosses the membrane as a helical span at residues Phe-150 to Leu-172. Residues Asn-173 to Gln-707 lie on the Extracellular side of the membrane. A coiled-coil region spans residues Asn-256–Ala-283. Residues Glu-345–Gly-392 are disordered. A compositionally biased stretch (pro residues) spans Thr-353 to Thr-367. Positions Pro-368–Pro-379 are enriched in low complexity.

Its subcellular location is the cell membrane. This Acetivibrio thermocellus (strain ATCC 27405 / DSM 1237 / JCM 9322 / NBRC 103400 / NCIMB 10682 / NRRL B-4536 / VPI 7372) (Clostridium thermocellum) protein is Anti-sigma-I factor RsgI9.